The primary structure comprises 119 residues: Large ribosomal subunit protein bL20 (119 aa).

Belongs to the bacterial ribosomal protein bL20 family.

In terms of biological role, binds directly to 23S ribosomal RNA and is necessary for the in vitro assembly process of the 50S ribosomal subunit. It is not involved in the protein synthesizing functions of that subunit. This chain is Large ribosomal subunit protein bL20, found in Clostridium acetobutylicum (strain ATCC 824 / DSM 792 / JCM 1419 / IAM 19013 / LMG 5710 / NBRC 13948 / NRRL B-527 / VKM B-1787 / 2291 / W).